A 255-amino-acid polypeptide reads, in one-letter code: tRNA (guanine-N(1)-)-methyltransferase (255 aa).

Residues Gly113 and 133–138 contribute to the S-adenosyl-L-methionine site; that span reads IGDYVL.

This sequence belongs to the RNA methyltransferase TrmD family. Homodimer.

It localises to the cytoplasm. The catalysed reaction is guanosine(37) in tRNA + S-adenosyl-L-methionine = N(1)-methylguanosine(37) in tRNA + S-adenosyl-L-homocysteine + H(+). Its function is as follows. Specifically methylates guanosine-37 in various tRNAs. This Klebsiella pneumoniae (strain 342) protein is tRNA (guanine-N(1)-)-methyltransferase.